The sequence spans 355 residues: Peptide chain release factor 1 (355 aa).

Gln231 is modified (N5-methylglutamine).

Belongs to the prokaryotic/mitochondrial release factor family. Post-translationally, methylated by PrmC. Methylation increases the termination efficiency of RF1.

The protein resides in the cytoplasm. Peptide chain release factor 1 directs the termination of translation in response to the peptide chain termination codons UAG and UAA. The protein is Peptide chain release factor 1 of Wolinella succinogenes (strain ATCC 29543 / DSM 1740 / CCUG 13145 / JCM 31913 / LMG 7466 / NCTC 11488 / FDC 602W) (Vibrio succinogenes).